The chain runs to 61 residues: Small ribosomal subunit protein uS14 (61 aa).

Zn(2+) contacts are provided by cysteine 24, cysteine 27, cysteine 40, and cysteine 43.

This sequence belongs to the universal ribosomal protein uS14 family. Zinc-binding uS14 subfamily. As to quaternary structure, part of the 30S ribosomal subunit. Contacts proteins S3 and S10. It depends on Zn(2+) as a cofactor.

Its function is as follows. Binds 16S rRNA, required for the assembly of 30S particles and may also be responsible for determining the conformation of the 16S rRNA at the A site. The polypeptide is Small ribosomal subunit protein uS14 (Roseiflexus castenholzii (strain DSM 13941 / HLO8)).